The sequence spans 571 residues: Streptolysin O (571 aa).

The N-terminal stretch at 1–33 (MSNKKTFKKYSRVAGLLTAALIIGNLVTANAES) is a signal peptide. A disordered region spans residues 30–108 (NAESNKQNTA…KKSEEDHTEE (79 aa)). Residues 37 to 48 (NTASTETTTTNE) show a composition bias toward low complexity. 2 stretches are compositionally biased toward basic and acidic residues: residues 50 to 68 (PKPE…KTDD) and 79 to 108 (APKE…HTEE). Transmembrane regions (beta stranded) follow at residues 260–273 (KSQI…NSKI), 280–289 (IDFKSISKGE), 358–367 (SNDVEAAFSA), and 375–387 (KTNG…LENS). Residues 529 to 539 (ECTGLAWEWWR) carry the Conserved undecapeptide motif. The Cholesterol binding motif lies at 561–562 (TL).

Belongs to the cholesterol-dependent cytolysin family. As to quaternary structure, homooligomeric pore complex of 35 to 50 subunits; when inserted in the host membrane.

The protein resides in the secreted. It is found in the host cell membrane. Functionally, a cholesterol-dependent toxin that causes cytolysis by forming pores in cholesterol containing host membranes. After binding to target membranes, the protein undergoes a major conformation change, leading to its insertion in the host membrane and formation of an oligomeric pore complex. Cholesterol is required for binding to host membranes, membrane insertion and pore formation; cholesterol binding is mediated by a Thr-Leu pair in the C-terminus. Can be reversibly inactivated by oxidation. In Streptococcus pyogenes serotype M18 (strain MGAS8232), this protein is Streptolysin O (slo).